Reading from the N-terminus, the 195-residue chain is MEDIKSLIAGVDEVGKGCLFGPVFAAAVILSKKNEIELLNQGLKDSKKLSQRQRHNLVPLIKTNSIAWTIGQASAREIDVMGIRDATEKAMLRALEKFSSPPDLILVDGILPIRLWPGKQKTQVRGESHFASIAAASVLAKETRDELIKRLARKYNCYGLEKNKGYGTEIHRTKLIKEGATKLHRKSFISRLKKN.

The RNase H type-2 domain occupies 6-195 (SLIAGVDEVG…KSFISRLKKN (190 aa)). A divalent metal cation is bound by residues aspartate 12, glutamate 13, and aspartate 108.

The protein belongs to the RNase HII family. It depends on Mn(2+) as a cofactor. Requires Mg(2+) as cofactor.

Its subcellular location is the cytoplasm. The catalysed reaction is Endonucleolytic cleavage to 5'-phosphomonoester.. Functionally, endonuclease that specifically degrades the RNA of RNA-DNA hybrids. In Prochlorococcus marinus (strain NATL2A), this protein is Ribonuclease HII.